The following is an 872-amino-acid chain: Protein SEY1 (872 aa).

Topologically, residues 1–749 are cytoplasmic; the sequence is MVANGHFAGV…KRSAIGGITQ (749 aa). The GB1/RHD3-type G domain occupies 49-307; the sequence is GFNYHLISVF…IPADGFAVYA (259 aa). Residue 59 to 66 coordinates GTP; that stretch reads GSQSTGKS. Residues 482-504 adopt a coiled-coil conformation; the sequence is SNYQQELSLYQKDLENIGGQLRR. Positions 676-704 are disordered; sequence LDKWIGHTPSSATPADEEDLTPIGGVDED. Acidic residues predominate over residues 690–704; sequence ADEEDLTPIGGVDED. A helical membrane pass occupies residues 750–770; it reads VPLYFYGLLLALGWNEIVAVL. The Lumenal portion of the chain corresponds to 771–773; that stretch reads RNP. A helical membrane pass occupies residues 774–794; sequence AYFLLLFVCAVTAYVTYQLNL. At 795–872 the chain is on the cytoplasmic side; that stretch reads WGPIIKMTEA…IDDADDDDDF (78 aa). Residues 849 to 872 form a disordered region; sequence NRKSAGGFQNNRSHIDDADDDDDF.

Belongs to the TRAFAC class dynamin-like GTPase superfamily. GB1/RHD3 GTPase family. RHD3 subfamily.

It is found in the endoplasmic reticulum membrane. In terms of biological role, cooperates with the reticulon proteins and tubule-shaping DP1 family proteins to generate and maintain the structure of the tubular endoplasmic reticulum network. Has GTPase activity, which is required for its function in ER organization. This is Protein SEY1 from Paracoccidioides brasiliensis (strain Pb18).